The chain runs to 697 residues: SPX domain-containing membrane protein OsI_08463 (697 aa).

The region spanning 2–145 (VNFGKRLMAD…GYKFTDYYVS (144 aa)) is the SPX domain. 11 helical membrane-spanning segments follow: residues 247-267 (FMSLLLNLANTFLYMVNTYII), 278-298 (LGAAATVCGVIIGSMAVAQVF), 315-335 (LVFSSIMLFLGNLLYALAYDV), 338-356 (LTVLIVGRLLCGLGSARAV), 375-395 (AGFVSASALGMACGPALAGLL), 411-431 (LPGWIMCLAWITYLFWLWISF), 513-533 (LLIYFMLKFAMEILLSESSVV), 544-564 (TVAMFLAVLGLTVLPVNVIVG), 576-596 (ILVASEIMVLIGIAMSFRFTS), 604-624 (VSSALITFVFAEVLEGVNLSL), and 670-690 (LLNVTLLPSFVICVASIVATF).

It belongs to the major facilitator superfamily.

It is found in the membrane. The polypeptide is SPX domain-containing membrane protein OsI_08463 (Oryza sativa subsp. indica (Rice)).